A 181-amino-acid chain; its full sequence is Inner membrane-spanning protein YciB (181 aa).

A run of 5 helical transmembrane segments spans residues 10–30, 50–70, 72–92, 118–138, and 148–168; these read LVIF…GALI, MHLI…VFHD, AFIK…LGVS, VTWY…YVAF, and FKVF…VFYL.

This sequence belongs to the YciB family.

The protein localises to the cell inner membrane. Its function is as follows. Plays a role in cell envelope biogenesis, maintenance of cell envelope integrity and membrane homeostasis. The chain is Inner membrane-spanning protein YciB from Shewanella oneidensis (strain ATCC 700550 / JCM 31522 / CIP 106686 / LMG 19005 / NCIMB 14063 / MR-1).